Consider the following 196-residue polypeptide: Large ribosomal subunit protein uL18 (196 aa).

It belongs to the universal ribosomal protein uL18 family. As to quaternary structure, part of the 50S ribosomal subunit. Contacts the 5S and 23S rRNAs.

This is one of the proteins that bind and probably mediate the attachment of the 5S RNA into the large ribosomal subunit, where it forms part of the central protuberance. This chain is Large ribosomal subunit protein uL18, found in Saccharolobus islandicus (strain Y.N.15.51 / Yellowstone #2) (Sulfolobus islandicus).